Here is a 415-residue protein sequence, read N- to C-terminus: 26S proteasome regulatory subunit 6B (415 aa).

ATP is bound at residue 203–210 (GPPGCGKT).

Belongs to the AAA ATPase family.

The protein resides in the cytoplasm. It localises to the nucleus. In terms of biological role, the 26S proteasome is involved in the ATP-dependent degradation of ubiquitinated proteins. The regulatory (or ATPase) complex confers ATP dependency and substrate specificity to the 26S complex. The polypeptide is 26S proteasome regulatory subunit 6B (Manduca sexta (Tobacco hawkmoth)).